We begin with the raw amino-acid sequence, 595 residues long: Estrogen receptor (595 aa).

Positions 1-184 are modulating (transactivation AF-1); mediates interaction with MACROD1; the sequence is MTMTLHTKAS…AMESAKETRY (184 aa). Ser-10 carries an O-linked (GlcNAc) serine glycan. Residues 35-47 form a required for interaction with NCOA1 region; the sequence is LERPLGEVYVDGS. Positions 35-174 are interaction with DDX5; self-association; that stretch reads LERPLGEVYV…LASTGDKGSM (140 aa). Ser-104 and Ser-106 each carry phosphoserine; by CDK2. Phosphoserine is present on Ser-118. Residues 149 to 173 are disordered; it reads FYRPTSDNRRQSGRERLASTGDKGS. Over residues 154-165 the composition is skewed to basic and acidic residues; sequence SDNRRQSGRERL. Phosphoserine; by CK2 is present on Ser-167. 2 consecutive NR C4-type zinc fingers follow at residues 185-205 and 221-245; these read CAVCNDYASGYHYGVWSCEGC and CPATNQCTIDKNRRKSCQACRLRKC. The nuclear receptor DNA-binding region spans 185 to 250; sequence CAVCNDYASG…RLRKCYEVGM (66 aa). Positions 185-310 are mediates interaction with DNTTIP2; that stretch reads CAVCNDYASG…TKKNSPALSL (126 aa). The hinge stretch occupies residues 251–310; sequence MKGGIRKDRRGGRMLKHKRQRDEGEGRNEVGSSGDVRASNLWPSPLLIKHTKKNSPALSL. Residues 257–269 show a composition bias toward basic residues; that stretch reads KDRRGGRMLKHKR. Residues 257–287 form a disordered region; sequence KDRRGGRMLKHKRQRDEGEGRNEVGSSGDVR. Arg-260 is subject to Asymmetric dimethylarginine; by PRMT1. Positions 262 to 595 are interaction with AKAP13; it reads GRMLKHKRQR…EEAGAFPTTV (334 aa). Positions 264–595 are self-association; that stretch reads MLKHKRQRDE…EEAGAFPTTV (332 aa). The region spanning 311–547 is the NR LBD domain; the sequence is TADQMVSALL…DLLLEMLDAH (237 aa). The transactivation AF-2 stretch occupies residues 311–595; sequence TADQMVSALL…EEAGAFPTTV (285 aa). 17beta-estradiol-binding residues include Glu-353 and Arg-394. The S-palmitoyl cysteine moiety is linked to residue Cys-447. His-524 is a binding site for 17beta-estradiol. Position 537 is a phosphotyrosine; by Tyr-kinases (Tyr-537). A glycan (O-linked (GlcNAc) threonine) is linked at Thr-571.

Belongs to the nuclear hormone receptor family. NR3 subfamily. As to quaternary structure, binds DNA as a homodimer. Can form a heterodimer with ESR2. Interacts with coactivator NCOA5. Interacts with PELP1, the interaction is enhanced by 17-beta-estradiol; the interaction increases ESR1 transcriptional activity. Interacts with NCOA7; the interaction is ligand-inducible. Interacts with AKAP13, CUEDC2, HEXIM1, KDM5A, MAP1S, SMARD1, and UBE1C. Interacts with MUC1; the interaction is stimulated by 7 beta-estradiol (E2) and enhances ESR1-mediated transcription. Interacts with DNTTIP2, and UIMC1. Interacts with KMT2D/MLL2. Interacts with ATAD2; the interaction is enhanced by estradiol. Interacts with KIF18A and LDB1. Interacts with RLIM (via its C-terminus). Interacts with MACROD1. Interacts with SH2D4A and PLCG. Interacts with SH2D4A; the interaction blocks binding to PLCG and inhibits estrogen-induced cell proliferation. Interacts with DYNLL1. Interacts with CCDC62; the interaction requires estradiol and appears to enhance the transcription of target genes. Interacts with NR2C1; the interaction prevents homodimerization of ESR1 and suppresses its transcriptional activity and cell growth. Interacts with DNAAF4. Interacts with PRMT2. Interacts with RBFOX2. Interacts with EP300; the interaction is estrogen-dependent and enhanced by CITED1. Interacts with CITED1; the interaction is estrogen-dependent. Interacts with FAM120B, FOXL2, PHB2 and SLC30A9. Interacts with coactivators NCOA3 and NCOA6. Interacts with STK3/MST2 only in the presence of SAV1 and vice-versa. Binds to CSNK1D. Interacts with NCOA2; NCOA2 can interact with ESR1 AF-1 and AF-2 domains simultaneously and mediate their transcriptional synergy. Interacts with DDX5. Interacts with NCOA1; the interaction seems to require a self-association of N-terminal and C-terminal regions. Interacts with ZNF366, DDX17, NFKB1, RELA, SP1 and SP3. Interacts with NRIP1. Interacts with GPER1; the interaction occurs in an estrogen-dependent manner. Interacts with CLOCK and the interaction is stimulated by estrogen. Interacts with TRIP4 (ufmylated); estrogen dependent. Interacts with LMTK3; the interaction phosphorylates ESR1 (in vitro) and protects it against proteasomal degradation. Interacts with CCAR2 (via N-terminus) in a ligand-independent manner. Interacts with ZFHX3. Interacts with SFR1 in a ligand-dependent and -independent manner. Interacts with DCAF13, LATS1 and DCAF1; regulates ESR1 ubiquitination and ubiquitin-mediated proteasomal degradation. Interacts (via DNA-binding domain) with POU4F2 (C-terminus); this interaction increases the estrogen receptor ESR1 transcriptional activity in a DNA- and ligand 17-beta-estradiol-independent manner. Interacts with ESRRB isoform 1. Interacts with UBE3A and WBP2. Interacts with GTF2B. Interacts with RBM39. In the absence of hormonal ligand, interacts with TACC1. Interacts with PI3KR1 or PI3KR2 and PTK2/FAK1. Interacts with SRC. Interacts with BAG1; the interaction is promoted in the absence of estradiol (17-beta-estradiol/E2). Interacts with and ubiquitinated by STUB1; the interaction is promoted in the absence of estradiol (17-beta-estradiol/E2). Interacts with NEDD8. In terms of processing, ubiquitinated; regulated by LATS1 via DCAF1 it leads to ESR1 proteasomal degradation. Deubiquitinated by OTUB1. Ubiquitinated by STUB1/CHIP; in the CA1 hippocampal region following loss of endogenous circulating estradiol (17-beta-estradiol/E2). Ubiquitinated by UBR5, leading to its degradation: UBR5 specifically recognizes and binds ligand-bound ESR1 when it is not associated with coactivators (NCOAs). In presence of NCOAs, the UBR5-degron is not accessible, preventing its ubiquitination and degradation. Post-translationally, phosphorylated by cyclin A/CDK2 and CK1. Phosphorylation probably enhances transcriptional activity. Dephosphorylation at Ser-118 by PPP5C inhibits its transactivation activity. Phosphorylated by LMTK3 (in vitro). Palmitoylated at Cys-447 by ZDHHC7 and ZDHHC21. Palmitoylation is required for plasma membrane targeting and for rapid intracellular signaling via ERK and AKT kinases and cAMP generation, but not for signaling mediated by the nuclear hormone receptor. In terms of processing, dimethylated by PRMT1 at Arg-260. The methylation may favor cytoplasmic localization. Demethylated by JMJD6 at Arg-260.

It is found in the nucleus. The protein localises to the cytoplasm. The protein resides in the golgi apparatus. It localises to the cell membrane. In terms of biological role, nuclear hormone receptor. The steroid hormones and their receptors are involved in the regulation of eukaryotic gene expression and affect cellular proliferation and differentiation in target tissues. Ligand-dependent nuclear transactivation involves either direct homodimer binding to a palindromic estrogen response element (ERE) sequence or association with other DNA-binding transcription factors, such as AP-1/c-Jun, c-Fos, ATF-2, Sp1 and Sp3, to mediate ERE-independent signaling. Ligand binding induces a conformational change allowing subsequent or combinatorial association with multiprotein coactivator complexes through LXXLL motifs of their respective components. Mutual transrepression occurs between the estrogen receptor (ER) and NF-kappa-B in a cell-type specific manner. Decreases NF-kappa-B DNA-binding activity and inhibits NF-kappa-B-mediated transcription from the IL6 promoter and displace RELA/p65 and associated coregulators from the promoter. Recruited to the NF-kappa-B response element of the CCL2 and IL8 promoters and can displace CREBBP. Present with NF-kappa-B components RELA/p65 and NFKB1/p50 on ERE sequences. Can also act synergistically with NF-kappa-B to activate transcription involving respective recruitment adjacent response elements; the function involves CREBBP. Can activate the transcriptional activity of TFF1. Also mediates membrane-initiated estrogen signaling involving various kinase cascades. Essential for MTA1-mediated transcriptional regulation of BRCA1 and BCAS3. Maintains neuronal survival in response to ischemic reperfusion injury when in the presence of circulating estradiol (17-beta-estradiol/E2). The polypeptide is Estrogen receptor (ESR1) (Felis catus (Cat)).